Here is a 230-residue protein sequence, read N- to C-terminus: UPF0173 metal-dependent hydrolase Rsph17029_0942 (230 aa).

Belongs to the UPF0173 family.

This is UPF0173 metal-dependent hydrolase Rsph17029_0942 from Cereibacter sphaeroides (strain ATCC 17029 / ATH 2.4.9) (Rhodobacter sphaeroides).